The sequence spans 316 residues: Erythritol catabolism regulatory protein EryD (316 aa).

The segment at residues 23-42 (QSAVAKRLGLPSVKAHRLIA) is a DNA-binding region (H-T-H motif).

It belongs to the SorC transcriptional regulatory family.

Its activity is regulated as follows. Erythritol may act as an inducer, probably by binding to EryD and inhibiting its repressor activity. Functionally, represses the expression of the eryABCD operon, which is involved in erythritol catabolism. This is Erythritol catabolism regulatory protein EryD from Brucella abortus (strain 2308).